Here is a 170-residue protein sequence, read N- to C-terminus: Lipoprotein signal peptidase (170 aa).

The next 2 helical transmembrane spans lie at 71–91 (YFFIGIAVVVSIFLIKLILEN) and 97–116 (AIAYSLILGGAMGNLIDRVF). Active-site residues include D122 and D140. The chain crosses the membrane as a helical span at residues 131–151 (WHWPAFNLADIAIVLGALLFV).

The protein belongs to the peptidase A8 family.

The protein resides in the cell inner membrane. It catalyses the reaction Release of signal peptides from bacterial membrane prolipoproteins. Hydrolyzes -Xaa-Yaa-Zaa-|-(S,diacylglyceryl)Cys-, in which Xaa is hydrophobic (preferably Leu), and Yaa (Ala or Ser) and Zaa (Gly or Ala) have small, neutral side chains.. It functions in the pathway protein modification; lipoprotein biosynthesis (signal peptide cleavage). This protein specifically catalyzes the removal of signal peptides from prolipoproteins. This is Lipoprotein signal peptidase from Serratia marcescens.